The sequence spans 269 residues: Thymidylate synthase (269 aa).

Residue Arg-21 participates in dUMP binding. Position 51 (His-51) interacts with (6R)-5,10-methylene-5,6,7,8-tetrahydrofolate. Position 126 to 127 (Arg-126 to Arg-127) interacts with dUMP. Cys-146 acts as the Nucleophile in catalysis. DUMP contacts are provided by residues Arg-171 to Asp-174, Asn-182, and His-212 to Tyr-214. Residue Asp-174 coordinates (6R)-5,10-methylene-5,6,7,8-tetrahydrofolate. Ala-268 contributes to the (6R)-5,10-methylene-5,6,7,8-tetrahydrofolate binding site.

The protein belongs to the thymidylate synthase family. Bacterial-type ThyA subfamily. Homodimer.

The protein resides in the cytoplasm. It catalyses the reaction dUMP + (6R)-5,10-methylene-5,6,7,8-tetrahydrofolate = 7,8-dihydrofolate + dTMP. It functions in the pathway pyrimidine metabolism; dTTP biosynthesis. Functionally, catalyzes the reductive methylation of 2'-deoxyuridine-5'-monophosphate (dUMP) to 2'-deoxythymidine-5'-monophosphate (dTMP) while utilizing 5,10-methylenetetrahydrofolate (mTHF) as the methyl donor and reductant in the reaction, yielding dihydrofolate (DHF) as a by-product. This enzymatic reaction provides an intracellular de novo source of dTMP, an essential precursor for DNA biosynthesis. This is Thymidylate synthase from Methylocella silvestris (strain DSM 15510 / CIP 108128 / LMG 27833 / NCIMB 13906 / BL2).